Consider the following 65-residue polypeptide: Small ribosomal subunit protein bS21 (65 aa).

Positions 46–57 (RLKRSRSKRRAQ) are enriched in basic residues. Positions 46-65 (RLKRSRSKRRAQRANEERNS) are disordered.

The protein belongs to the bacterial ribosomal protein bS21 family.

This is Small ribosomal subunit protein bS21 from Chlorobaculum tepidum (strain ATCC 49652 / DSM 12025 / NBRC 103806 / TLS) (Chlorobium tepidum).